The following is a 98-amino-acid chain: Large ribosomal subunit protein bL25 (98 aa).

It belongs to the bacterial ribosomal protein bL25 family. Part of the 50S ribosomal subunit; part of the 5S rRNA/L5/L18/L25 subcomplex. Contacts the 5S rRNA. Binds to the 5S rRNA independently of L5 and L18.

In terms of biological role, this is one of the proteins that binds to the 5S RNA in the ribosome where it forms part of the central protuberance. In Synechocystis sp. (strain ATCC 27184 / PCC 6803 / Kazusa), this protein is Large ribosomal subunit protein bL25.